Here is a 116-residue protein sequence, read N- to C-terminus: Large ribosomal subunit protein uL18 (116 aa).

This sequence belongs to the universal ribosomal protein uL18 family. Part of the 50S ribosomal subunit; part of the 5S rRNA/L5/L18/L25 subcomplex. Contacts the 5S and 23S rRNAs.

Functionally, this is one of the proteins that bind and probably mediate the attachment of the 5S RNA into the large ribosomal subunit, where it forms part of the central protuberance. The polypeptide is Large ribosomal subunit protein uL18 (Pseudomonas fluorescens (strain ATCC BAA-477 / NRRL B-23932 / Pf-5)).